The sequence spans 645 residues: Phosphomethylpyrimidine synthase (645 aa).

Substrate-binding positions include Asn-235, Met-264, Tyr-293, His-329, 349–351, 390–393, and Glu-429; these read SRG and DGLR. A Zn(2+)-binding site is contributed by His-433. Position 456 (Tyr-456) interacts with substrate. Residue His-497 participates in Zn(2+) binding. Residues Cys-577, Cys-580, and Cys-585 each contribute to the [4Fe-4S] cluster site.

Belongs to the ThiC family. As to quaternary structure, homodimer. The cofactor is [4Fe-4S] cluster.

The enzyme catalyses 5-amino-1-(5-phospho-beta-D-ribosyl)imidazole + S-adenosyl-L-methionine = 4-amino-2-methyl-5-(phosphooxymethyl)pyrimidine + CO + 5'-deoxyadenosine + formate + L-methionine + 3 H(+). The protein operates within cofactor biosynthesis; thiamine diphosphate biosynthesis. Catalyzes the synthesis of the hydroxymethylpyrimidine phosphate (HMP-P) moiety of thiamine from aminoimidazole ribotide (AIR) in a radical S-adenosyl-L-methionine (SAM)-dependent reaction. This Vibrio cholerae serotype O1 (strain ATCC 39541 / Classical Ogawa 395 / O395) protein is Phosphomethylpyrimidine synthase.